The chain runs to 236 residues: 4-hydroxy-tetrahydrodipicolinate reductase (236 aa).

NAD(+) is bound by residues 11–16 (GASGRM), 92–94 (GTT), and 116–119 (GSNF). The active-site Proton donor/acceptor is the His148. His149 is a (S)-2,3,4,5-tetrahydrodipicolinate binding site. Lys152 acts as the Proton donor in catalysis. 158–159 (GS) provides a ligand contact to (S)-2,3,4,5-tetrahydrodipicolinate.

Belongs to the DapB family.

The protein localises to the cytoplasm. The enzyme catalyses (S)-2,3,4,5-tetrahydrodipicolinate + NAD(+) + H2O = (2S,4S)-4-hydroxy-2,3,4,5-tetrahydrodipicolinate + NADH + H(+). The catalysed reaction is (S)-2,3,4,5-tetrahydrodipicolinate + NADP(+) + H2O = (2S,4S)-4-hydroxy-2,3,4,5-tetrahydrodipicolinate + NADPH + H(+). Its pathway is amino-acid biosynthesis; L-lysine biosynthesis via DAP pathway; (S)-tetrahydrodipicolinate from L-aspartate: step 4/4. Its function is as follows. Catalyzes the conversion of 4-hydroxy-tetrahydrodipicolinate (HTPA) to tetrahydrodipicolinate. This Xylella fastidiosa (strain M23) protein is 4-hydroxy-tetrahydrodipicolinate reductase.